The primary structure comprises 103 residues: Small ribosomal subunit protein uS10 (103 aa).

It belongs to the universal ribosomal protein uS10 family. As to quaternary structure, part of the 30S ribosomal subunit.

In terms of biological role, involved in the binding of tRNA to the ribosomes. The chain is Small ribosomal subunit protein uS10 from Polynucleobacter necessarius subsp. necessarius (strain STIR1).